The sequence spans 343 residues: L-threonine 3-dehydrogenase (343 aa).

Cys-40 lines the Zn(2+) pocket. Residues Thr-42 and His-45 each act as charge relay system in the active site. 6 residues coordinate Zn(2+): His-65, Glu-66, Cys-95, Cys-98, Cys-101, and Cys-109. Residues Ile-177, Asp-197, Arg-202, 264–266, and 288–289 contribute to the NAD(+) site; these read LGI and IY.

The protein belongs to the zinc-containing alcohol dehydrogenase family. As to quaternary structure, homotetramer. The cofactor is Zn(2+).

It localises to the cytoplasm. The enzyme catalyses L-threonine + NAD(+) = (2S)-2-amino-3-oxobutanoate + NADH + H(+). The protein operates within amino-acid degradation; L-threonine degradation via oxydo-reductase pathway; glycine from L-threonine: step 1/2. Functionally, catalyzes the NAD(+)-dependent oxidation of L-threonine to 2-amino-3-ketobutyrate. The sequence is that of L-threonine 3-dehydrogenase from Vibrio atlanticus (strain LGP32) (Vibrio splendidus (strain Mel32)).